A 750-amino-acid polypeptide reads, in one-letter code: Signal transducer and activator of transcription 1-alpha/beta (750 aa).

Ser-2 is subject to N-acetylserine. 6 positions are modified to N6-methyllysine: Lys-114, Lys-175, Lys-296, Lys-366, Lys-525, and Lys-637. Positions 136–317 form a coiled coil; the sequence is LDKQKELDSK…LFQQLIQSSF (182 aa). The SH2 domain occupies 573–670; sequence WNDGCIMGFI…ENPLKYLYPN (98 aa). The residue at position 657 (Glu-657) is an ADP-ribosyl glutamic acid; by PARP14. Lys-665 carries the N6-methyllysine modification. Tyr-701 carries the post-translational modification Phosphotyrosine; by JAK1, JAK2 or TYK2. Residue Lys-703 forms a Glycyl lysine isopeptide (Lys-Gly) (interchain with G-Cter in SUMO1); alternate linkage. Lys-703 is covalently cross-linked (Glycyl lysine isopeptide (Lys-Gly) (interchain with G-Cter in SUMO2); alternate). An ADP-ribosyl glutamic acid; by PARP14 modification is found at Glu-705. A Phosphoserine; by IKKE modification is found at Ser-708. A Phosphoserine; by CAMK2 and MAPK14 modification is found at Ser-727. Ser-745 carries the phosphoserine; by IKKE modification. At Thr-749 the chain carries Phosphothreonine; by IKKB.

The protein belongs to the transcription factor STAT family. Isoform alpha homodimerizes upon IFN-gamma induced phosphorylation. Heterodimer with STAT2 upon IFN-alpha/beta induced phosphorylation. The heterodimer STAT1:STAT2 forms the interferon-stimulated gene factor 3 complex (ISGF3) with IRF9. Interacts (phosphorylated at Ser-727) with PIAS1; the interaction results in release of STAT1 from its target gene. Interacts with IFNAR1; the interaction requires the phosphorylation of IFNAR1 at 'Tyr-466'. Interacts with IFNAR2. Found in a complex with NMI and CREBBP/CBP. Interacts with NMI which is required for CREBBP/CBP recruitment to the complex. Interacts with PTK2/FAK1. Interacts with SRC. Interacts with ERBB4 (phosphorylated). Interacts with PARP9 and DTX3L independently of IFN-beta or IFN-gamma-mediated STAT1 'Tyr-701' phosphorylation. Interacts with histone acetyltransferase EP300/p300 in response to INF-gamma stimulation. Independently of its phosphorylation status, interacts with OTOP1. Interacts with IFNGR1. Interacts with STAT4. In terms of assembly, (Microbial infection) Interacts with Sendai virus C', C, Y1 and Y2 proteins, preventing activation of ISRE and GAS promoter. As to quaternary structure, (Microbial infection) Interacts with Nipah virus P, V and W proteins preventing activation of ISRE and GAS promoter. (Microbial infection) Interacts with Rabies virus phosphoprotein preventing activation of ISRE and GAS promoter. In terms of assembly, (Microbial infection) Interacts with HCV core protein; the interaction results in STAT1 degradation. As to quaternary structure, (Microbial infection) Interacts with ebolavirus protein VP24. (Microbial infection) Interacts with Epstein-Barr virus (EBV) tegument protein BGLF2; this interaction leads to STAT1 dephosphorylation and inhibition. In terms of assembly, (Microbial infection) Interacts (via N-terminus) with measles V protein; this interaction inhibits STAT1 phosphorylation by Jak1 and thereby the type I interferon signaling pathway. In terms of processing, deubiquitinated by USP13; leading to STAT1 stabilization and positive regulation of type I and type II IFN signalings. Phosphorylated on tyrosine and serine residues in response to a variety of cytokines/growth hormones including IFN-alpha, IFN-gamma, PDGF and EGF. Activated KIT promotes phosphorylation on tyrosine residues and subsequent translocation to the nucleus. Upon EGF stimulation, phosphorylation on Tyr-701 (lacking in beta form) by JAK1, JAK2 or TYK2 promotes dimerization and subsequent translocation to the nucleus. Growth hormone (GH) activates STAT1 signaling only via JAK2. Tyrosine phosphorylated in response to constitutively activated FGFR1, FGFR2, FGFR3 and FGFR4. Phosphorylation on Ser-727 by several kinases including MAPK14, ERK1/2, CAMK2/CAMKII and CK2 in response to IFN-gamma stimulation, is required for maximal transcriptional activity. Phosphorylated on Ser-727 by CAMK2/CAMKII in response to IFN-gamma stimulation and calcium mobilization, promoting activity. Phosphorylated by CAMK2/CAMKII in response to IFN-beta stimulation and calcium mobilization in epithelial cells, promoting activity. Phosphorylation on Ser-727 promotes sumoylation though increasing interaction with PIAS. Phosphorylation on Ser-727 by PRKCD induces apoptosis in response to DNA-damaging agents. Phosphorylated on tyrosine residues when PTK2/FAK1 is activated; most likely this is catalyzed by a SRC family kinase. Dephosphorylation on tyrosine residues by PTPN2 negatively regulates interferon-mediated signaling. Upon viral infection or IFN induction, phosphorylation on Ser-708 occurs much later than phosphorylation on Tyr-701 and is required for the binding of ISGF3 on the ISREs of a subset of IFN-stimulated genes IKBKE-dependent. Phosphorylation at Tyr-701 and Ser-708 are mutually exclusive, phosphorylation at Ser-708 requires previous dephosphorylation of Tyr-701. Phosphorylation at Thr-749 by IKBKB/IKKB promotes transcriptional activation of ARID5A and IL12B by STAT1. Phosphorylation at Thr-749 restricts interferon signaling and anti-inflammatory responses and promotes innate inflammatory responses. Post-translationally, sumoylated with SUMO1, SUMO2 and SUMO3. Sumoylation is enhanced by IFN-gamma-induced phosphorylation on Ser-727, and by interaction with PIAS proteins. Enhances the transactivation activity. In terms of processing, ISGylated. Mono-ADP-ribosylated at Glu-657 and Glu-705 by PARP14; ADP-ribosylation prevents phosphorylation at Tyr-701. However, the role of ADP-ribosylation in the prevention of phosphorylation has been called into question and the lack of phosphorylation may be due to sumoylation of Lys-703. Post-translationally, monomethylated at Lys-525 by SETD2; monomethylation is necessary for phosphorylation at Tyr-701, translocation into the nucleus and activation of the antiviral defense. In terms of processing, (Microbial infection) Ubiquitinated by Herpes simplex virus 2 E3 ubiquitin ligase ICP22.

It localises to the cytoplasm. Its subcellular location is the nucleus. Signal transducer and transcription activator that mediates cellular responses to interferons (IFNs), cytokine KITLG/SCF and other cytokines and other growth factors. Following type I IFN (IFN-alpha and IFN-beta) binding to cell surface receptors, signaling via protein kinases leads to activation of Jak kinases (TYK2 and JAK1) and to tyrosine phosphorylation of STAT1 and STAT2. The phosphorylated STATs dimerize and associate with ISGF3G/IRF-9 to form a complex termed ISGF3 transcription factor, that enters the nucleus. ISGF3 binds to the IFN stimulated response element (ISRE) to activate the transcription of IFN-stimulated genes (ISG), which drive the cell in an antiviral state. In response to type II IFN (IFN-gamma), STAT1 is tyrosine- and serine-phosphorylated. It then forms a homodimer termed IFN-gamma-activated factor (GAF), migrates into the nucleus and binds to the IFN gamma activated sequence (GAS) to drive the expression of the target genes, inducing a cellular antiviral state. Becomes activated in response to KITLG/SCF and KIT signaling. May mediate cellular responses to activated FGFR1, FGFR2, FGFR3 and FGFR4. Following bacterial lipopolysaccharide (LPS)-induced TLR4 endocytosis, phosphorylated at Thr-749 by IKBKB which promotes binding of STAT1 to the 5'-TTTGAGGC-3' sequence in the ARID5A promoter, resulting in transcriptional activation of ARID5A and subsequent ARID5A-mediated stabilization of IL6. Phosphorylation at Thr-749 also promotes binding of STAT1 to the 5'-TTTGAGTC-3' sequence in the IL12B promoter and activation of IL12B transcription. Involved in food tolerance in small intestine: associates with the Gasdermin-D, p13 cleavage product (13 kDa GSDMD) and promotes transcription of CIITA, inducing type 1 regulatory T (Tr1) cells in upper small intestine. The sequence is that of Signal transducer and activator of transcription 1-alpha/beta (STAT1) from Homo sapiens (Human).